The chain runs to 220 residues: Translation initiation factor 6 (220 aa).

This sequence belongs to the eIF-6 family.

Functionally, binds to the 50S ribosomal subunit and prevents its association with the 30S ribosomal subunit to form the 70S initiation complex. The protein is Translation initiation factor 6 of Halobacterium salinarum (strain ATCC 29341 / DSM 671 / R1).